Here is a 172-residue protein sequence, read N- to C-terminus: Glutamyl-tRNA(Gln) amidotransferase subunit C-3, mitochondrial (172 aa).

The interval 49 to 71 is disordered; it reads KHPSKVPQRPNKSTIDGQSTPTR. Over residues 58-71 the composition is skewed to polar residues; it reads PNKSTIDGQSTPTR.

This sequence belongs to the GatC family. As to quaternary structure, subunit of the heterotrimeric GatCAB amidotransferase (AdT) complex, composed of A, B and C subunits.

The protein localises to the mitochondrion. It carries out the reaction L-glutamyl-tRNA(Gln) + L-glutamine + ATP + H2O = L-glutaminyl-tRNA(Gln) + L-glutamate + ADP + phosphate + H(+). Functionally, allows the formation of correctly charged Gln-tRNA(Gln) through the transamidation of misacylated Glu-tRNA(Gln) in the mitochondria. The reaction takes place in the presence of glutamine and ATP through an activated gamma-phospho-Glu-tRNA(Gln). The polypeptide is Glutamyl-tRNA(Gln) amidotransferase subunit C-3, mitochondrial (Culex quinquefasciatus (Southern house mosquito)).